A 211-amino-acid chain; its full sequence is Phosphoserine phosphatase (211 aa).

D11 functions as the Nucleophile in the catalytic mechanism. 2 residues coordinate Mg(2+): D11 and D13. The active-site Proton donor is the D13. Residues E20, R56, 99 to 100, and K144 each bind substrate; that span reads SG. A Mg(2+)-binding site is contributed by D167. Residue N170 participates in substrate binding.

The protein belongs to the HAD-like hydrolase superfamily. SerB family. Mg(2+) serves as cofactor.

The catalysed reaction is O-phospho-L-serine + H2O = L-serine + phosphate. It catalyses the reaction O-phospho-D-serine + H2O = D-serine + phosphate. It functions in the pathway amino-acid biosynthesis; L-serine biosynthesis; L-serine from 3-phospho-D-glycerate: step 3/3. The chain is Phosphoserine phosphatase from Methanocaldococcus jannaschii (strain ATCC 43067 / DSM 2661 / JAL-1 / JCM 10045 / NBRC 100440) (Methanococcus jannaschii).